A 362-amino-acid polypeptide reads, in one-letter code: 3-dehydroquinate synthase (362 aa).

NAD(+)-binding positions include 71–76, 105–109, 129–130, lysine 142, and lysine 151; these read DGEQYK, GVIGD, and TT. Zn(2+)-binding residues include glutamate 184, histidine 247, and histidine 264.

Belongs to the sugar phosphate cyclases superfamily. Dehydroquinate synthase family. Requires NAD(+) as cofactor. Co(2+) serves as cofactor. The cofactor is Zn(2+).

It localises to the cytoplasm. It carries out the reaction 7-phospho-2-dehydro-3-deoxy-D-arabino-heptonate = 3-dehydroquinate + phosphate. It functions in the pathway metabolic intermediate biosynthesis; chorismate biosynthesis; chorismate from D-erythrose 4-phosphate and phosphoenolpyruvate: step 2/7. In terms of biological role, catalyzes the conversion of 3-deoxy-D-arabino-heptulosonate 7-phosphate (DAHP) to dehydroquinate (DHQ). The chain is 3-dehydroquinate synthase from Haemophilus ducreyi (strain 35000HP / ATCC 700724).